Consider the following 240-residue polypeptide: MSAVPNAVIPNPDNLSVSAPEKLSGFEWWRRSLQYRTGMGLDPQEKAQFEFDYQHKYLPQQCNSCIEFRDWMLTYSPSVTFMMDHIKKLSPNKEQILNKSNIICDVCDDLKGGGFHPQEGILLCANRIQSKWQLEDILTHELVHVYDHLKFQVNLNDLKHHACTEIRASMLSGECRIFNEIKKTGLGDFGKKFQSCIKRRAILSVSANPICKDSEEAEKVVNSVWQSCFNDTRPFERVYR.

Histidine 140 is a binding site for a divalent metal cation. Residue glutamate 141 is part of the active site. Histidine 144 contacts a divalent metal cation.

It belongs to the peptidase M76 family.

It localises to the mitochondrion inner membrane. Has a dual role in the assembly of mitochondrial ATPase. Acts as a protease that removes N-terminal residues of mitochondrial ATPase CF(0) subunit 6 at the intermembrane space side. Also involved in the correct assembly of the membrane-embedded ATPase CF(0) particle, probably mediating association of subunit 6 with the subunit 9 ring. The polypeptide is Mitochondrial inner membrane protease ATP23 (ATP23) (Scheffersomyces stipitis (strain ATCC 58785 / CBS 6054 / NBRC 10063 / NRRL Y-11545) (Yeast)).